The following is a 252-amino-acid chain: Flap endonuclease Xni (252 aa).

A Mg(2+)-binding site is contributed by D105. The region spanning 161-251 (VESTQFIDYL…NVNLKQFRIE (91 aa)) is the 5'-3' exonuclease domain. Positions 172, 173, 181, 183, and 186 each coordinate K(+). Residues 185 to 190 (GIGPKS) are interaction with DNA.

Belongs to the Xni family. The cofactor is Mg(2+). Requires K(+) as cofactor.

Has flap endonuclease activity. During DNA replication, flap endonucleases cleave the 5'-overhanging flap structure that is generated by displacement synthesis when DNA polymerase encounters the 5'-end of a downstream Okazaki fragment. This chain is Flap endonuclease Xni, found in Shewanella halifaxensis (strain HAW-EB4).